The primary structure comprises 558 residues: Atlastin-1 (558 aa).

The disordered stretch occupies residues 1–27 (MAKNRRDRNSWGGFSEKTYEWSSEEEE). The N-terminal hypervariable region (HVR) stretch occupies residues 1–34 (MAKNRRDRNSWGGFSEKTYEWSSEEEEPVKKAGP). The Cytoplasmic segment spans residues 1–449 (MAKNRRDRNS…NIFHAARTPA (449 aa)). Phosphoserine is present on residues S10, S22, and S23. The region spanning 64–309 (DKEVVAVSVA…LIPWLLSPES (246 aa)) is the GB1/RHD3-type G domain. The GDP site is built by R77, K78, G79, K80, S81, F82, Q148, R217, D218, V276, and N279. GTP is bound by residues R77, K78, G79, K80, S81, and F82. Mg(2+) is bound at residue S81. GTP-binding residues include R217, D218, and V276. Residues 347 to 438 (MLQATAEANN…YIQYIKHNDS (92 aa)) form a 3HB (three-helix bundle) domain region. K395 carries the post-translational modification N6-acetyllysine. Residues 412–439 (EFSRRYLQQLESEIDELYIQYIKHNDSK) are a coiled coil. A linker region spans residues 439–447 (KNIFHAART). The chain crosses the membrane as a helical span at residues 450-470 (TLFVVIFITYVIAGVTGFIGL). D471 is a topological domain (lumenal). A helical transmembrane segment spans residues 472-492 (IIASLCNMIMGLTLITLCTWA). Residues 493-558 (YIRYSGEYRE…STEQSEKKKM (66 aa)) are Cytoplasmic-facing. The segment at 521-558 (NEALYKLYSAAATHRHLYHQAFPTPKSESTEQSEKKKM) is autoinhibitory domain.

This sequence belongs to the TRAFAC class dynamin-like GTPase superfamily. GB1/RHD3 GTPase family. GB1 subfamily. Monomeric and homodimeric. The homodimer, transiently formed by two molecules on opposing membranes, is the active form mediating ER membrane fusion. Interacts with REEP1, REEP5, RTN3 and RTN4 (via the transmembrane region); these proteins are involved in endoplasmic reticulum tubular network organization. Interacts with ZFYVE27; both proteins are involved in endoplasmic reticulum tubular network organization. Interacts with ARL6IP1; both proteins are involved in endoplasmic reticulum tubular network organization. Interacts with SPAST; the interaction is direct, could recruit SPAST to Golgi membranes. Interacts (via N-terminal region) with MAP4K4 (via CNH regulatory domain). May interact with TMED2. Interacts with CPT1C. Phosphorylated. Phosphorylation, by different kinases, of the N-terminal hypervariable region (HVR) regulates the ATL1-mediated membrane tethering step.

It is found in the endoplasmic reticulum membrane. Its subcellular location is the golgi apparatus membrane. It localises to the cell projection. The protein localises to the axon. The enzyme catalyses GTP + H2O = GDP + phosphate + H(+). Its function is as follows. Atlastin-1 (ATL1) is a membrane-anchored GTPase that mediates the GTP-dependent fusion of endoplasmic reticulum (ER) membranes, maintaining the continuous ER network. It facilitates the formation of three-way junctions where ER tubules intersect. Two atlastin-1 on neighboring ER tubules bind GTP and form loose homodimers through the GB1/RHD3-type G domains and 3HB regions. Upon GTP hydrolysis, the 3HB regions tighten, pulling the membranes together to drive their fusion. After fusion, the homodimer disassembles upon release of inorganic phosphate (Pi). Subsequently, GDP dissociates, resetting the monomers to a conformation ready for a new fusion cycle. May also regulate more or less directly Golgi biogenesis. Indirectly regulates axonal development. This is Atlastin-1 from Macaca fascicularis (Crab-eating macaque).